A 2498-amino-acid polypeptide reads, in one-letter code: PKS-NRPS hybrid synthetase acdB (2498 aa).

Residues 34 to 427 (FEQAAHAHFD…GRADSQVKIR (394 aa)) are adenylation (A) domain. The Carrier 1 domain occupies 531 to 606 (QPATELERDI…SLAGYLMDMD (76 aa)). An O-(pantetheine 4'-phosphoryl)serine modification is found at S566. The 432-residue stretch at 627-1058 (SDDIAVVSMA…GTNAHVIVEE (432 aa)) folds into the Ketosynthase family 3 (KS3) domain. Catalysis depends on for beta-ketoacyl synthase activity residues C802, H938, and H979. A malonyl-CoA:ACP transacylase (MAT) domain region spans residues 1165–1485 (LFAGQGSQQL…EILARLHVQH (321 aa)). Residues 1739–1917 (GAVLITGGLS…PAVCVAYGPL (179 aa)) are ketoreductase (KR) domain. The 76-residue stretch at 2017–2092 (EILLRTIQEA…ELSRYLLPQL (76 aa)) folds into the Carrier 2 domain. S2052 carries the O-(pantetheine 4'-phosphoryl)serine modification. The thioester reductase (TE) domain stretch occupies residues 2149–2378 (VTGATEFVGA…FPVDYVCRTI (230 aa)).

In the C-terminal section; belongs to the NRP synthetase family. Pantetheine 4'-phosphate is required as a cofactor.

It participates in secondary metabolite biosynthesis. Functionally, PKS-NRPS hybrid synthetase; part of the gene cluster that mediates the biosynthesis of aspcandine, a pyrrolobenzazepine alkaloid. Initially, the indoleamine 2,3-dioxygenase acdA accepts L-tryptophan and performs the oxidative opening of the indole ring to yield N'-formyl-L-kynurenine, which undergoes the spontaneous deformylation reaction to provide L-kynurenine. The kynurenine 3-monooxygenase acdD then hydroxylates L-kynurenine to afford 3-hydroxy-L-kynurenine. 3-hydroxy-L-kynurenine is activated by the A domain of the NRPS-PKS acdB and subsequently loaded onto the enzyme. The KS domain conducts the decarboxylative condensation of the 3-hydroxy-L-kynurenyl and malonyl moieties, and subsequent nucleophilic attacks by the two amino groups would occur nonenzymatically at two distinct positions, achieving the chain release and the construction of the tricyclic system. Finally, a dehydration reaction completes the biosynthesis to yield aspcandine. In Aspergillus candidus, this protein is PKS-NRPS hybrid synthetase acdB.